Consider the following 430-residue polypeptide: Long-chain specific acyl-CoA dehydrogenase, mitochondrial (430 aa).

Residues 1–30 (MATRLLRGSLRLWGGLCAPRLPTASRCSHS) constitute a mitochondrion transit peptide. Lys42 is modified (N6-acetyllysine). Ser54 and Ser55 each carry phosphoserine. 2 positions are modified to N6-acetyllysine; alternate: Lys66 and Lys81. Residues Lys66 and Lys81 each carry the N6-succinyllysine; alternate modification. An N6-acetyllysine mark is found at Lys92 and Lys95. Lys165 carries the post-translational modification N6-succinyllysine. FAD contacts are provided by residues 170 to 179 (IAMTEPGAGS) and 203 to 205 (FIT). Ser179 lines the substrate pocket. 227–228 (AH) serves as a coordination point for substrate. Lys240 carries the post-translational modification N6-succinyllysine. 2 positions are modified to N6-acetyllysine; alternate: Lys254 and Lys279. N6-succinyllysine; alternate is present on residues Lys254 and Lys279. Substrate is bound by residues Tyr282 and 289–292 (PQER). The active-site Proton acceptor is Glu291. Arg317 is an FAD binding site. Lys318 is modified (N6-acetyllysine). Lys322 is subject to N6-acetyllysine; alternate. At Lys322 the chain carries N6-succinyllysine; alternate. Residue Gln328 coordinates FAD. Position 358 is an N6-acetyllysine (Lys358). Ser362 is modified (phosphoserine). 385 to 389 (QLHGG) serves as a coordination point for FAD. 412 to 413 (GG) is a binding site for substrate. 414–416 (TNE) provides a ligand contact to FAD.

This sequence belongs to the acyl-CoA dehydrogenase family. Homotetramer. FAD serves as cofactor. Acetylation at Lys-318 and Lys-322 in proximity of the cofactor-binding sites strongly reduces catalytic activity. These sites are deacetylated by SIRT3.

Its subcellular location is the mitochondrion matrix. It carries out the reaction a long-chain 2,3-saturated fatty acyl-CoA + oxidized [electron-transfer flavoprotein] + H(+) = a long-chain (2E)-enoyl-CoA + reduced [electron-transfer flavoprotein]. The enzyme catalyses hexanoyl-CoA + oxidized [electron-transfer flavoprotein] + H(+) = (2E)-hexenoyl-CoA + reduced [electron-transfer flavoprotein]. The catalysed reaction is octanoyl-CoA + oxidized [electron-transfer flavoprotein] + H(+) = (2E)-octenoyl-CoA + reduced [electron-transfer flavoprotein]. It catalyses the reaction decanoyl-CoA + oxidized [electron-transfer flavoprotein] + H(+) = (2E)-decenoyl-CoA + reduced [electron-transfer flavoprotein]. It carries out the reaction dodecanoyl-CoA + oxidized [electron-transfer flavoprotein] + H(+) = (2E)-dodecenoyl-CoA + reduced [electron-transfer flavoprotein]. The enzyme catalyses tetradecanoyl-CoA + oxidized [electron-transfer flavoprotein] + H(+) = (2E)-tetradecenoyl-CoA + reduced [electron-transfer flavoprotein]. The catalysed reaction is oxidized [electron-transfer flavoprotein] + hexadecanoyl-CoA + H(+) = (2E)-hexadecenoyl-CoA + reduced [electron-transfer flavoprotein]. It catalyses the reaction octadecanoyl-CoA + oxidized [electron-transfer flavoprotein] + H(+) = (2E)-octadecenoyl-CoA + reduced [electron-transfer flavoprotein]. It carries out the reaction eicosanoyl-CoA + oxidized [electron-transfer flavoprotein] + H(+) = (2E)-eicosenoyl-CoA + reduced [electron-transfer flavoprotein]. The enzyme catalyses docosanoyl-CoA + oxidized [electron-transfer flavoprotein] + H(+) = (2E)-docosenoyl-CoA + reduced [electron-transfer flavoprotein]. The catalysed reaction is tetracosanoyl-CoA + oxidized [electron-transfer flavoprotein] + H(+) = (2E)-tetracosenoyl-CoA + reduced [electron-transfer flavoprotein]. It catalyses the reaction (5E)-tetradecenoyl-CoA + oxidized [electron-transfer flavoprotein] + H(+) = (2E,5E)-tetradecadienoyl-CoA + reduced [electron-transfer flavoprotein]. It carries out the reaction (5Z)-tetradecenoyl-CoA + oxidized [electron-transfer flavoprotein] + H(+) = (2E,5Z)-tetradecadienoyl-CoA + reduced [electron-transfer flavoprotein]. The enzyme catalyses oxidized [electron-transfer flavoprotein] + (9Z)-octadecenoyl-CoA + H(+) = (2E,9Z)-octadecadienoyl-CoA + reduced [electron-transfer flavoprotein]. It functions in the pathway lipid metabolism; mitochondrial fatty acid beta-oxidation. Its function is as follows. Long-chain specific acyl-CoA dehydrogenase is one of the acyl-CoA dehydrogenases that catalyze the first step of mitochondrial fatty acid beta-oxidation, an aerobic process breaking down fatty acids into acetyl-CoA and allowing the production of energy from fats. The first step of fatty acid beta-oxidation consists in the removal of one hydrogen from C-2 and C-3 of the straight-chain fatty acyl-CoA thioester, resulting in the formation of trans-2-enoyl-CoA. Among the different mitochondrial acyl-CoA dehydrogenases, long-chain specific acyl-CoA dehydrogenase can act on saturated and unsaturated acyl-CoAs with 6 to 24 carbons with a preference for 8 to 18 carbons long primary chains. This is Long-chain specific acyl-CoA dehydrogenase, mitochondrial from Sus scrofa (Pig).